The following is a 63-amino-acid chain: Lantibiotic mutacin-1140 (63 aa).

Positions 1–41 are excised as a propeptide; the sequence is MSNTQLLEVLGTETFDVQEDLFAFDTTDTTIVASNDDPDTR. The lanthionine (Ser-Cys) cross-link spans 44-48; it reads SWSLC. Residue Ser46 is modified to 2,3-didehydroalanine (Ser). The beta-methyllanthionine (Thr-Cys) cross-link spans 49–52; that stretch reads TPGC. Thr55 is subject to 2,3-didehydrobutyrine. Positions 57–62 form a cross-link, lanthionine (Ser-Cys); sequence SFNSYC. Residues 60–63 constitute a cross-link (S-(2-aminovinyl)-D-cysteine (Ser-Cys)); it reads SYCC.

Belongs to the type A lantibiotic family. Maturation of lantibiotics involves the enzymatic conversion of Thr, and Ser into dehydrated AA and the formation of thioether bonds with cysteine. The C-terminal lanthionine undergoes decarboxylation. This is followed by membrane translocation and cleavage of the modified precursor. Post-translationally, the structure of the 2,3-didehydrobutyrine is not discussed in PubMed:11082191.

Functionally, lanthionine-containing peptide antibiotic (lantibiotic) active on Gram-positive bacteria. The bactericidal activity of lantibiotics is based on depolarization of energized bacterial cytoplasmic membranes, initiated by the formation of aqueous transmembrane pores. The sequence is that of Lantibiotic mutacin-1140 (lanA) from Streptococcus mutans.